Reading from the N-terminus, the 180-residue chain is uncharacterized protein (180 aa).

This sequence to H.influenzae HI_0656.1.

This is an uncharacterized protein from Escherichia coli (strain K12).